The following is a 744-amino-acid chain: MTIPNDIRITPELVAAHGLKPDEYQRILDLIGREPTFTELGIFSAMWNEHCSYKSSKRWLRTLPTSGPQVIQGPGENAGVVDIGDGQCVVFKMESHNHPSYIEPYQGAATGVGGILRDVFTMGARPIAAMNALRFGAPDHPKTQHLVAGVVAGIGGYGNSFGVPTVGGEVNFDPRYNGNCLVNAFAAGLARTDGIFYSKAEGVGLPVVYLGAKTGRDGVGGATMASAEFDETIEEKRPTVQVGDPFTEKCLLEACLELMATGAVIAIQDMGAAGLTCSAVEMGAKGDLGIELDLDKVPVREERMSAYEMMLSESQERMLMVLRPEKEPEAEEIFRKWGLDFAIVGRTTDDLRFRILHGGEEVANLPIKELGDEAPEYDRPWAEPKMPPALDAATVPAADVADSLLKLLGSPDLSSRRWVWEQYDTLIQGNSLQIPGGDAGVVRVEDHPTKALAFSSDVTPRYCEADSFEGGKQAVAECWRNLTATGADPLAVTDNLNFGNPERPEIMGQFVRAIKGIGEACRALSFPIVSGNVSLYNETLGQAIPPTPTIAGVGLIPDWSKMARIAFAGEGQAILLAGAPESWGTHLGQSAYLRDVHGRAEGAPPPVDLAHEKRVGDFVRGVIRSGTVTAAHDCSDGGLAVALAEMAMASGIGARIDAPVNSASAAFFGEDQGRYVLTAALAREDAQLATLIEDARKAGVSLIAIGVTGGRELKLGEARAISVEELKEAHEGWFPRFMQDGSLQ.

His-50 is an active-site residue. ATP contacts are provided by Tyr-53 and Lys-92. Residue Glu-94 coordinates Mg(2+). Substrate contacts are provided by residues 95 to 98 (SHNH) and Arg-117. The active-site Proton acceptor is the His-96. Residue Asp-118 participates in Mg(2+) binding. Gln-241 serves as a coordination point for substrate. Asp-269 serves as a coordination point for Mg(2+). Residue 313 to 315 (ESQ) coordinates substrate. ATP-binding residues include Asp-494 and Gly-531. Residue Asn-532 coordinates Mg(2+). Ser-534 provides a ligand contact to substrate.

It belongs to the FGAMS family. In terms of assembly, monomer. Part of the FGAM synthase complex composed of 1 PurL, 1 PurQ and 2 PurS subunits.

It localises to the cytoplasm. The catalysed reaction is N(2)-formyl-N(1)-(5-phospho-beta-D-ribosyl)glycinamide + L-glutamine + ATP + H2O = 2-formamido-N(1)-(5-O-phospho-beta-D-ribosyl)acetamidine + L-glutamate + ADP + phosphate + H(+). Its pathway is purine metabolism; IMP biosynthesis via de novo pathway; 5-amino-1-(5-phospho-D-ribosyl)imidazole from N(2)-formyl-N(1)-(5-phospho-D-ribosyl)glycinamide: step 1/2. Part of the phosphoribosylformylglycinamidine synthase complex involved in the purines biosynthetic pathway. Catalyzes the ATP-dependent conversion of formylglycinamide ribonucleotide (FGAR) and glutamine to yield formylglycinamidine ribonucleotide (FGAM) and glutamate. The FGAM synthase complex is composed of three subunits. PurQ produces an ammonia molecule by converting glutamine to glutamate. PurL transfers the ammonia molecule to FGAR to form FGAM in an ATP-dependent manner. PurS interacts with PurQ and PurL and is thought to assist in the transfer of the ammonia molecule from PurQ to PurL. This is Phosphoribosylformylglycinamidine synthase subunit PurL from Chelativorans sp. (strain BNC1).